The sequence spans 292 residues: UPF0761 membrane protein Ping_3482 (292 aa).

Helical transmembrane passes span 43–63 (LLSI…FPVF), 100–120 (MSMM…STID), 139–159 (FTIY…SLAL), 179–199 (LLSL…YTLV), 209–229 (ALIG…LFRL), and 243–263 (ALAV…IVLI).

This sequence belongs to the UPF0761 family.

The protein resides in the cell inner membrane. In Psychromonas ingrahamii (strain DSM 17664 / CCUG 51855 / 37), this protein is UPF0761 membrane protein Ping_3482.